Reading from the N-terminus, the 302-residue chain is D-alanine--D-alanine ligase (302 aa).

Residues 100–294 (KALFRREGLL…FPELVEKLIQ (195 aa)) form the ATP-grasp domain. Residue 127–180 (GLNYPIFVKSNIGGSSVNVHLVTNYEELFIAMEALFNAGEEVLLEEAIIGQEVT) participates in ATP binding. Mg(2+) contacts are provided by D248, E261, and N263.

It belongs to the D-alanine--D-alanine ligase family. It depends on Mg(2+) as a cofactor. Mn(2+) is required as a cofactor.

It is found in the cytoplasm. It catalyses the reaction 2 D-alanine + ATP = D-alanyl-D-alanine + ADP + phosphate + H(+). It participates in cell wall biogenesis; peptidoglycan biosynthesis. Functionally, cell wall formation. This is D-alanine--D-alanine ligase from Lawsonia intracellularis (strain PHE/MN1-00).